We begin with the raw amino-acid sequence, 205 residues long: ATP-dependent Clp protease proteolytic subunit (205 aa).

The active-site Nucleophile is the Ser107. His132 is a catalytic residue.

The protein belongs to the peptidase S14 family. In terms of assembly, fourteen ClpP subunits assemble into 2 heptameric rings which stack back to back to give a disk-like structure with a central cavity, resembling the structure of eukaryotic proteasomes.

The protein resides in the cytoplasm. It carries out the reaction Hydrolysis of proteins to small peptides in the presence of ATP and magnesium. alpha-casein is the usual test substrate. In the absence of ATP, only oligopeptides shorter than five residues are hydrolyzed (such as succinyl-Leu-Tyr-|-NHMec, and Leu-Tyr-Leu-|-Tyr-Trp, in which cleavage of the -Tyr-|-Leu- and -Tyr-|-Trp bonds also occurs).. Functionally, cleaves peptides in various proteins in a process that requires ATP hydrolysis. Has a chymotrypsin-like activity. Plays a major role in the degradation of misfolded proteins. This is ATP-dependent Clp protease proteolytic subunit from Pseudoalteromonas translucida (strain TAC 125).